A 459-amino-acid polypeptide reads, in one-letter code: Argininosuccinate lyase (459 aa).

Belongs to the lyase 1 family. Argininosuccinate lyase subfamily.

It localises to the cytoplasm. The catalysed reaction is 2-(N(omega)-L-arginino)succinate = fumarate + L-arginine. The protein operates within amino-acid biosynthesis; L-arginine biosynthesis; L-arginine from L-ornithine and carbamoyl phosphate: step 3/3. This Geobacillus kaustophilus (strain HTA426) protein is Argininosuccinate lyase.